Here is a 227-residue protein sequence, read N- to C-terminus: Pro-thyrotropin-releasing hormone-A (227 aa).

A signal peptide spans 1 to 15 (MVSVWWLLLLGTTVS). Gln75 carries the pyrrolidone carboxylic acid modification. Pro77 carries the post-translational modification Proline amide. Gln89 is subject to Pyrrolidone carboxylic acid. The residue at position 91 (Pro91) is a Proline amide. The residue at position 107 (Gln107) is a Pyrrolidone carboxylic acid. Disordered regions lie at residues 107–128 (QHPGRRFVDDVEKRQHPGKREE) and 151–204 (RRQH…PCEG). Pro109 is subject to Proline amide. Over residues 112-128 (RFVDDVEKRQHPGKREE) the composition is skewed to basic and acidic residues. Residue Gln121 is modified to Pyrrolidone carboxylic acid. Position 123 is a proline amide (Pro123). Gln153 is subject to Pyrrolidone carboxylic acid. Pro155 is subject to Proline amide. A Pyrrolidone carboxylic acid modification is found at Gln168. Pro170 carries the post-translational modification Proline amide. Over residues 184–201 (ENSKEVGKRQHPGKRYDP) the composition is skewed to basic and acidic residues. Gln193 carries the pyrrolidone carboxylic acid modification. Pro195 carries the post-translational modification Proline amide.

It belongs to the TRH family.

It is found in the secreted. The chain is Pro-thyrotropin-releasing hormone-A (trh-a) from Xenopus laevis (African clawed frog).